The primary structure comprises 303 residues: Aspartate carbamoyltransferase catalytic subunit (303 aa).

The carbamoyl phosphate site is built by R51 and T52. K80 serves as a coordination point for L-aspartate. Residues R101, H129, and Q132 each coordinate carbamoyl phosphate. Positions 162 and 221 each coordinate L-aspartate. Carbamoyl phosphate contacts are provided by L260 and P261.

Belongs to the aspartate/ornithine carbamoyltransferase superfamily. ATCase family. As to quaternary structure, heterooligomer of catalytic and regulatory chains.

It catalyses the reaction carbamoyl phosphate + L-aspartate = N-carbamoyl-L-aspartate + phosphate + H(+). Its pathway is pyrimidine metabolism; UMP biosynthesis via de novo pathway; (S)-dihydroorotate from bicarbonate: step 2/3. Its function is as follows. Catalyzes the condensation of carbamoyl phosphate and aspartate to form carbamoyl aspartate and inorganic phosphate, the committed step in the de novo pyrimidine nucleotide biosynthesis pathway. This chain is Aspartate carbamoyltransferase catalytic subunit, found in Saccharolobus solfataricus (strain ATCC 35092 / DSM 1617 / JCM 11322 / P2) (Sulfolobus solfataricus).